The sequence spans 483 residues: Protein hedgehog (483 aa).

Residues 1 to 19 (MDNQTVAAIWSCASATCLS) form the signal peptide. A propeptide spanning residues 20–92 (LDAKRHSVET…LALNFRHAHS (73 aa)) is cleaved from the precursor. The interval 28 to 57 (ETNTNDRQAPPGLSNSNNNNNNNKSTAVDA) is disordered. Over residues 41–50 (SNSNNNNNNN) the composition is skewed to low complexity. A lipid anchor (N-palmitoyl cysteine) is attached at C93. Positions 157, 158, 163, 193, 194, 197, and 199 each coordinate Ca(2+). The Cholesterol glycine ester moiety is linked to residue G266.

It belongs to the hedgehog family. In terms of assembly, interacts with shf. Post-translationally, the C-terminal part of the hedgehog protein precursor displays an autoproteolysis activity that results in the cleavage of the full-length protein into two parts (N-product and C-product). In addition, the C-terminal part displays a cholesterol transferase activity that results by the covalent attachment of a cholesterol moiety to the C-terminal of the newly generated N-product. The N-product is the active species in both local and long-range signaling, whereas the C-product has no signaling activity. In terms of processing, cholesterylation is required for N-product targeting to lipid rafts and multimerization. N-palmitoylation by Rasp of the hedgehog N-product, within the secretory pathway, is required for the embryonic and larval patterning activities of the hedgehog signal.

Its subcellular location is the nucleus. The protein localises to the cytoplasm. It localises to the cell membrane. The enzyme catalyses glycyl-L-cysteinyl-[protein] + cholesterol + H(+) = [protein]-C-terminal glycyl cholesterol ester + N-terminal L-cysteinyl-[protein]. Its function is as follows. The C-terminal part of the hedgehog protein precursor displays an autoproteolysis activity that results in the cleavage of the full-length protein into two parts (N-product and C-product). In addition, the C-terminal part displays a cholesterol transferase activity that results by the covalent attachment of a cholesterol moiety to the C-terminal of the newly generated N-product. Once cleaved, the C-product has no signaling activity and diffuses from the cell. In terms of biological role, the dually lipidated hedgehog protein N-product is a morphogen which is essential for a variety of patterning events during development. Establishes the anterior-posterior axis of the embryonic segments and patterns the larval imaginal disks. Binds to the patched (ptc) receptor, which functions in association with smoothened (smo), to activate the transcription of target genes wingless (wg), decapentaplegic (dpp) and ptc. In the absence of hh, ptc represses the constitutive signaling activity of smo through fused (fu). Essential component of a signaling pathway which regulates the Duox-dependent gut immune response to bacterial uracil; required to activate Cad99C-dependent endosome formation, norpA-dependent Ca2+ mobilization and p38 MAPK, which are essential steps in the Duox-dependent production of reactive oxygen species (ROS) in response to intestinal bacterial infection. During photoreceptor differentiation, it up-regulates transcription of Ubr3, which in turn promotes the hh-signaling pathway by mediating the ubiquitination and degradation of cos. The protein is Protein hedgehog of Drosophila virilis (Fruit fly).